A 435-amino-acid chain; its full sequence is Trigger factor (435 aa).

In terms of domain architecture, PPIase FKBP-type spans 162-247 (GDRVIIDFKG…VKNVAEATLP (86 aa)).

Belongs to the FKBP-type PPIase family. Tig subfamily.

The protein resides in the cytoplasm. The catalysed reaction is [protein]-peptidylproline (omega=180) = [protein]-peptidylproline (omega=0). Its function is as follows. Involved in protein export. Acts as a chaperone by maintaining the newly synthesized protein in an open conformation. Functions as a peptidyl-prolyl cis-trans isomerase. This is Trigger factor from Chromobacterium violaceum (strain ATCC 12472 / DSM 30191 / JCM 1249 / CCUG 213 / NBRC 12614 / NCIMB 9131 / NCTC 9757 / MK).